The following is a 174-amino-acid chain: RNA pyrophosphohydrolase (174 aa).

A Nudix hydrolase domain is found at 6–149 (GFRANVGIII…KRDVYRKVMK (144 aa)). The Nudix box signature appears at 38 to 59 (GGVDDGETAEEAMYRELYEEVG).

This sequence belongs to the Nudix hydrolase family. RppH subfamily. Requires a divalent metal cation as cofactor.

Its function is as follows. Accelerates the degradation of transcripts by removing pyrophosphate from the 5'-end of triphosphorylated RNA, leading to a more labile monophosphorylated state that can stimulate subsequent ribonuclease cleavage. In Shewanella sp. (strain MR-7), this protein is RNA pyrophosphohydrolase.